A 209-amino-acid polypeptide reads, in one-letter code: uncharacterized protein (209 aa).

The span at 1-15 (MHRIDTKTAQKDKFG) shows a compositional bias: basic and acidic residues. The tract at residues 1–34 (MHRIDTKTAQKDKFGAGKNGFTRGNPQTGTPATD) is disordered. Residues 22–31 (TRGNPQTGTP) are compositionally biased toward polar residues.

This sequence to E.coli YfdL and M.jannaschii MJ0347.

This is an uncharacterized protein from Escherichia coli (strain K12).